We begin with the raw amino-acid sequence, 142 residues long: MLTNKEIRELLPHRYPFLLVDKVIELEPGKKVVAVKNVSANEPFFQGHFPEYPIMPGVLIVEALAQAAGIAVAVLEDNKGKLGVFAGIEAMKFKNQVMPGDVLTLEAEILVSKLGVTKAKVKASVDGKVAAEGEIKFAMTKA.

His48 is a catalytic residue.

This sequence belongs to the thioester dehydratase family. FabZ subfamily.

Its subcellular location is the cytoplasm. It carries out the reaction a (3R)-hydroxyacyl-[ACP] = a (2E)-enoyl-[ACP] + H2O. Functionally, involved in unsaturated fatty acids biosynthesis. Catalyzes the dehydration of short chain beta-hydroxyacyl-ACPs and long chain saturated and unsaturated beta-hydroxyacyl-ACPs. This is 3-hydroxyacyl-[acyl-carrier-protein] dehydratase FabZ from Ruminiclostridium cellulolyticum (strain ATCC 35319 / DSM 5812 / JCM 6584 / H10) (Clostridium cellulolyticum).